The chain runs to 335 residues: DNA-directed RNA polymerase RPB7 homolog (335 aa).

This sequence belongs to the Asfivirus DNA-directed RNA polymerase RPB7 homolog family. As to quaternary structure, part of the viral DNA-directed RNA polymerase that consists of 8 polII-like subunits (RPB1, RPB2, RPB3, RPB5, RPB6, RPB7, RPB9, RPB10), a capping enzyme and a termination factor.

The protein localises to the host cytoplasm. The protein resides in the virion. Functionally, component of the DNA-directed RNA polymerase (RNAP) that catalyzes the transcription in the cytoplasm of viral DNA into RNA using the four ribonucleoside triphosphates as substrates. The chain is DNA-directed RNA polymerase RPB7 homolog from African swine fever virus (isolate Pig/Kenya/KEN-50/1950) (ASFV).